The chain runs to 244 residues: Haloacid dehalogenase-like hydrolase domain-containing protein 3 (244 aa).

This sequence belongs to the HAD-like hydrolase superfamily.

In Xenopus laevis (African clawed frog), this protein is Haloacid dehalogenase-like hydrolase domain-containing protein 3 (hdhd3).